Reading from the N-terminus, the 238-residue chain is 7-cyano-7-deazaguanine synthase (238 aa).

Position 14–24 (14–24 (FSGGQDSATCL)) interacts with ATP. Zn(2+)-binding residues include Cys-202, Cys-217, Cys-220, and Cys-223.

It belongs to the QueC family. Zn(2+) is required as a cofactor.

It carries out the reaction 7-carboxy-7-deazaguanine + NH4(+) + ATP = 7-cyano-7-deazaguanine + ADP + phosphate + H2O + H(+). It participates in purine metabolism; 7-cyano-7-deazaguanine biosynthesis. In terms of biological role, catalyzes the ATP-dependent conversion of 7-carboxy-7-deazaguanine (CDG) to 7-cyano-7-deazaguanine (preQ(0)). The sequence is that of 7-cyano-7-deazaguanine synthase from Nitrobacter hamburgensis (strain DSM 10229 / NCIMB 13809 / X14).